The following is a 189-amino-acid chain: Dirigent protein 21 (189 aa).

Positions 1–19 are cleaved as a signal peptide; it reads MASLYLLLLLPLFLALILA. 2 N-linked (GlcNAc...) asparagine glycosylation sites follow: Asn72 and Asn173.

Belongs to the plant dirigent protein family. In terms of assembly, homodimer.

It is found in the secreted. Functionally, dirigent proteins impart stereoselectivity on the phenoxy radical-coupling reaction, yielding optically active lignans from two molecules of coniferyl alcohol in the biosynthesis of lignans, flavonolignans, and alkaloids and thus plays a central role in plant secondary metabolism. This Arabidopsis thaliana (Mouse-ear cress) protein is Dirigent protein 21 (DIR21).